We begin with the raw amino-acid sequence, 234 residues long: 2,3-bisphosphoglycerate-dependent phosphoglycerate mutase 1 (234 aa).

Substrate-binding positions include R14–N21, T27–G28, R66, and E93–Y96. H15 acts as the Tele-phosphohistidine intermediate in catalysis. E93 serves as the catalytic Proton donor/acceptor.

It belongs to the phosphoglycerate mutase family. BPG-dependent PGAM subfamily. Homodimer.

The enzyme catalyses (2R)-2-phosphoglycerate = (2R)-3-phosphoglycerate. The protein operates within carbohydrate degradation; glycolysis; pyruvate from D-glyceraldehyde 3-phosphate: step 3/5. In terms of biological role, catalyzes the interconversion of 2-phosphoglycerate and 3-phosphoglycerate. This Nitrosomonas europaea (strain ATCC 19718 / CIP 103999 / KCTC 2705 / NBRC 14298) protein is 2,3-bisphosphoglycerate-dependent phosphoglycerate mutase 1.